Here is a 256-residue protein sequence, read N- to C-terminus: Trans-aconitate 2-methyltransferase (256 aa).

This sequence belongs to the methyltransferase superfamily. Tam family.

It localises to the cytoplasm. The enzyme catalyses trans-aconitate + S-adenosyl-L-methionine = (E)-3-(methoxycarbonyl)pent-2-enedioate + S-adenosyl-L-homocysteine. Its function is as follows. Catalyzes the S-adenosylmethionine monomethyl esterification of trans-aconitate. The chain is Trans-aconitate 2-methyltransferase from Rhodopseudomonas palustris (strain HaA2).